We begin with the raw amino-acid sequence, 508 residues long: MKLAYWMYAGPAHIGTLRIASSFKKVHAIMHAPLGDDYFNVMRSMLERDRDFTPVTASVVDRHVLARGSQEKVVENITRKDREESPDLVILTPTCTSSILQEDLQNFVSRASIETEADVLLADVNHYRVNELQAGDRTLEQIVTFYMEKAKSNNQVLTQKTKTPSVNIIGAVSLGFHNQHDIAELKRLFQDLDIQINQIIPENASVQDLKKLPSAWFNFIPYRETGLMTARYLEKEFNMPYVDITPMGIVQTAACIRSIQQLVNALGAAVDYEKYIDEQTRFISQSAWFSRSIDCQNLTGKKAIVFGDATHAAAITRILHQEMGIHVAWCGTYCKYDEEWFKDQVQEFCDEVIVSDDHGLIGDLIAKTEPAAIFGTQMERHIGKRLNIPCGVISSPVHIQNFPLSYRPFLGYEGTNQIADLVYNSFTLGMEDHLLEIFGGHDTTEALSIGISAVDSINWSEEAQKELNKIPGFVRGKVKRNTEKFARDCSKNLITLEVMYEAKEKVSS.

A [4Fe-4S] cluster-binding site is contributed by aspartate 36. Residue aspartate 294 is the Proton donor of the active site. 429-430 (GM) serves as a coordination point for substrate.

It belongs to the ChlB/BchB/BchZ family. Protochlorophyllide reductase is composed of three subunits; ChlL, ChlN and ChlB. Forms a heterotetramer of two ChlB and two ChlN subunits. It depends on [4Fe-4S] cluster as a cofactor.

Its subcellular location is the plastid. It localises to the chloroplast. It catalyses the reaction chlorophyllide a + oxidized 2[4Fe-4S]-[ferredoxin] + 2 ADP + 2 phosphate = protochlorophyllide a + reduced 2[4Fe-4S]-[ferredoxin] + 2 ATP + 2 H2O. Its pathway is porphyrin-containing compound metabolism; chlorophyll biosynthesis (light-independent). Its function is as follows. Component of the dark-operative protochlorophyllide reductase (DPOR) that uses Mg-ATP and reduced ferredoxin to reduce ring D of protochlorophyllide (Pchlide) to form chlorophyllide a (Chlide). This reaction is light-independent. The NB-protein (ChlN-ChlB) is the catalytic component of the complex. The sequence is that of Light-independent protochlorophyllide reductase subunit B from Pyropia yezoensis (Susabi-nori).